The sequence spans 1186 residues: uncharacterized protein (1186 aa).

This is an uncharacterized protein from Acheta domesticus (House cricket).